A 115-amino-acid polypeptide reads, in one-letter code: Large ribosomal subunit protein bL20c (115 aa).

The protein belongs to the bacterial ribosomal protein bL20 family.

The protein resides in the plastid. Its subcellular location is the chloroplast. Functionally, binds directly to 23S ribosomal RNA and is necessary for the in vitro assembly process of the 50S ribosomal subunit. It is not involved in the protein synthesizing functions of that subunit. This chain is Large ribosomal subunit protein bL20c, found in Physcomitrium patens (Spreading-leaved earth moss).